The primary structure comprises 196 residues: Small ribosomal subunit protein uS4c (196 aa).

The interval 17–38 (ALPGLTRKTPKSRSNLKKKFHS) is disordered. The span at 24 to 38 (KTPKSRSNLKKKFHS) shows a compositional bias: basic residues. An S4 RNA-binding domain is found at 89–169 (MRLDNILFRL…LPKHLTIDTL (81 aa)).

Belongs to the universal ribosomal protein uS4 family. As to quaternary structure, part of the 30S ribosomal subunit. Contacts protein S5. The interaction surface between S4 and S5 is involved in control of translational fidelity.

The protein localises to the plastid. The protein resides in the chloroplast. Its function is as follows. One of the primary rRNA binding proteins, it binds directly to 16S rRNA where it nucleates assembly of the body of the 30S subunit. With S5 and S12 plays an important role in translational accuracy. The protein is Small ribosomal subunit protein uS4c (rps4) of Lygeum spartum.